A 242-amino-acid chain; its full sequence is Sec-independent protein translocase protein TatCd (242 aa).

Transmembrane regions (helical) follow at residues 19–39 (IIVT…FVQD), 60–80 (ILWV…IPVA), and 107–127 (LFAL…PIVL). Positions 128–149 (SFLTHLSSGHFETMFTADRYFR) are interaction with TatAd. A helical transmembrane segment spans residues 150–170 (FMVNLSLPFGFLFEMPLVVMF). An interaction with TatAd region spans residues 171-187 (LTRLGILNPYRLAKARK). Helical transmembrane passes span 188–208 (LSYF…FISD) and 209–229 (FLVM…SAFV).

It belongs to the TatC family. As to quaternary structure, forms a complex with TatAd. Two types of complexes exist: one composed of TatAd and TatCd, and another composed only of TatAd.

It localises to the cell membrane. In terms of biological role, part of the twin-arginine translocation (Tat) system that transports large folded proteins containing a characteristic twin-arginine motif in their signal peptide across membranes. Required for PhoD secretion. TatCd promotes membrane localization of TatAd via domain specific interactions. TatCd is required for stabile production of TatAd as well as for its maintenance. This chain is Sec-independent protein translocase protein TatCd, found in Bacillus subtilis (strain 168).